Here is a 160-residue protein sequence, read N- to C-terminus: SsrA-binding protein (160 aa).

The protein belongs to the SmpB family.

The protein localises to the cytoplasm. In terms of biological role, required for rescue of stalled ribosomes mediated by trans-translation. Binds to transfer-messenger RNA (tmRNA), required for stable association of tmRNA with ribosomes. tmRNA and SmpB together mimic tRNA shape, replacing the anticodon stem-loop with SmpB. tmRNA is encoded by the ssrA gene; the 2 termini fold to resemble tRNA(Ala) and it encodes a 'tag peptide', a short internal open reading frame. During trans-translation Ala-aminoacylated tmRNA acts like a tRNA, entering the A-site of stalled ribosomes, displacing the stalled mRNA. The ribosome then switches to translate the ORF on the tmRNA; the nascent peptide is terminated with the 'tag peptide' encoded by the tmRNA and targeted for degradation. The ribosome is freed to recommence translation, which seems to be the essential function of trans-translation. This is SsrA-binding protein from Yersinia enterocolitica serotype O:8 / biotype 1B (strain NCTC 13174 / 8081).